We begin with the raw amino-acid sequence, 564 residues long: Keratin, type II cytoskeletal 6A (564 aa).

Residues 1–11 (MASTSTTIRSH) are compositionally biased toward low complexity. Positions 1–23 (MASTSTTIRSHSSSRRGFSANSA) are disordered. Ala2 carries the post-translational modification N-acetylalanine. The head stretch occupies residues 2–162 (ASTSTTIRSH…DPTIQRVRAE (161 aa)). Residues 163 to 198 (EREQIKTLNNKFASFIDKVRFLEQQNKVLETKWTLL) form a coil 1A region. In terms of domain architecture, IF rod spans 163 to 476 (EREQIKTLNN…KLLEGEECRL (314 aa)). Positions 199–217 (QEQGTKTVRQNLEPLFEQY) are linker 1. Residues 218-309 (INNLRRQLDS…ALYDAELSQM (92 aa)) form a coil 1B region. The linker 12 stretch occupies residues 310–333 (QTHISDTSVVLSMDNNRNLDLDSI). A coil 2 region spans residues 334-472 (IAEVKAQYEE…ATYRKLLEGE (139 aa)). Residues 473-564 (ECRLNGEGVG…SSSSRKSYKH (92 aa)) form a tail region.

This sequence belongs to the intermediate filament family. In terms of assembly, heterodimer of a type I and a type II keratin. KRT6 isomers associate with KRT16 and/or KRT17. Interacts with TCHP. As to expression, expressed in the corneal epithelium (at protein level).

Functionally, epidermis-specific type I keratin involved in wound healing. Involved in the activation of follicular keratinocytes after wounding, while it does not play a major role in keratinocyte proliferation or migration. Participates in the regulation of epithelial migration by inhibiting the activity of SRC during wound repair. The protein is Keratin, type II cytoskeletal 6A (KRT6A) of Homo sapiens (Human).